A 218-amino-acid chain; its full sequence is N-(5'-phosphoribosyl)anthranilate isomerase (218 aa).

Belongs to the TrpF family.

The catalysed reaction is N-(5-phospho-beta-D-ribosyl)anthranilate = 1-(2-carboxyphenylamino)-1-deoxy-D-ribulose 5-phosphate. It participates in amino-acid biosynthesis; L-tryptophan biosynthesis; L-tryptophan from chorismate: step 3/5. This chain is N-(5'-phosphoribosyl)anthranilate isomerase, found in Halalkalibacterium halodurans (strain ATCC BAA-125 / DSM 18197 / FERM 7344 / JCM 9153 / C-125) (Bacillus halodurans).